Reading from the N-terminus, the 199-residue chain is MIAKLTGRLDSNGAGHAVIDVGGVGYLVEASARTLDALGAVGGEVTIHTEMLVGEDFLRLLGFARAEERDWFRLLTSVQGVGAKVALAILSALEVADLQRALASGDSAMIARANGVGPKLAQRITHELKDKAGALGGISGSGPALSAAAGPVGDAIAALTGLGFKPGEASAAVAAANEELGADASLDALVRVALKKAAK.

A domain I region spans residues 1–64 (MIAKLTGRLD…EDFLRLLGFA (64 aa)). Residues 65 to 143 (RAEERDWFRL…ALGGISGSGP (79 aa)) are domain II. Residues 144 to 146 (ALS) form a flexible linker region. Positions 147–199 (AAAGPVGDAIAALTGLGFKPGEASAAVAAANEELGADASLDALVRVALKKAAK) are domain III.

Belongs to the RuvA family. Homotetramer. Forms an RuvA(8)-RuvB(12)-Holliday junction (HJ) complex. HJ DNA is sandwiched between 2 RuvA tetramers; dsDNA enters through RuvA and exits via RuvB. An RuvB hexamer assembles on each DNA strand where it exits the tetramer. Each RuvB hexamer is contacted by two RuvA subunits (via domain III) on 2 adjacent RuvB subunits; this complex drives branch migration. In the full resolvosome a probable DNA-RuvA(4)-RuvB(12)-RuvC(2) complex forms which resolves the HJ.

It is found in the cytoplasm. Its function is as follows. The RuvA-RuvB-RuvC complex processes Holliday junction (HJ) DNA during genetic recombination and DNA repair, while the RuvA-RuvB complex plays an important role in the rescue of blocked DNA replication forks via replication fork reversal (RFR). RuvA specifically binds to HJ cruciform DNA, conferring on it an open structure. The RuvB hexamer acts as an ATP-dependent pump, pulling dsDNA into and through the RuvAB complex. HJ branch migration allows RuvC to scan DNA until it finds its consensus sequence, where it cleaves and resolves the cruciform DNA. This is Holliday junction branch migration complex subunit RuvA from Sphingopyxis alaskensis (strain DSM 13593 / LMG 18877 / RB2256) (Sphingomonas alaskensis).